A 119-amino-acid polypeptide reads, in one-letter code: Large ribosomal subunit protein bL20c (119 aa).

Belongs to the bacterial ribosomal protein bL20 family.

It is found in the plastid. The protein resides in the chloroplast. Its function is as follows. Binds directly to 23S ribosomal RNA and is necessary for the in vitro assembly process of the 50S ribosomal subunit. It is not involved in the protein synthesizing functions of that subunit. This chain is Large ribosomal subunit protein bL20c (rpl20), found in Pinus thunbergii (Japanese black pine).